We begin with the raw amino-acid sequence, 1022 residues long: Collagen alpha-1(I) chain (1022 aa).

The disordered stretch occupies residues 1 to 1022 (SAGGISVPGP…PGPPGPPGPP (1022 aa)). A 4-hydroxyproline mark is found at P20, P23, P26, P35, P38, P41, P56, P71, P77, P86, and P92. The segment covering 28–47 (PQGFQGPPGEPGEPGASGPM) has biased composition (low complexity). A compositionally biased stretch (basic and acidic residues) spans 59 to 73 (NGDDGEAGKPGRPGE). At K95 the chain carries 5-hydroxylysine; alternate. K95 is a glycosylation site (O-linked (Gal...) hydroxylysine; alternate). S101 bears the Phosphoserine mark. A compositionally biased stretch (low complexity) spans 109 to 125 (DAGPAGPKGEPGSPGEN). A 4-hydroxyproline mark is found at P119, P122, P128, P137, P143, P164, P173, P176, P203, P206, P218, P224, P233, P239, P242, and P257. Over residues 143–161 (PGASGPAGARGNDGAAGAA) the composition is skewed to low complexity. Over residues 163 to 175 (PPGPTGPAGPPGF) the composition is skewed to pro residues. Over residues 209 to 259 (AGAAGPAGNPGADGQPGAKGANGAPGIAGAPGFPGARGPSGPQGPSGAPGP) the composition is skewed to low complexity. The residue at position 260 (K260) is a 5-hydroxylysine. 4-hydroxyproline occurs at positions 266, 269, 281, 290, 305, 311, 320, and 326. Residues 315–324 (GERGGPGSRG) show a composition bias toward gly residues. Residue K335 is modified to 5-hydroxylysine. 4-hydroxyproline occurs at positions 344, 353, 359, 365, 374, 377, 386, 395, 401, 413, 422, 431, 434, 452, 470, 476, 482, 488, 494, 500, 512, 521, 533, 545, 548, 554, 560, and 569. The segment covering 368–394 (KGLTGSPGSPGPDGKTGPPGPAGQDGR) has biased composition (low complexity). Residues 403–422 (ARGQAGVMGFPGPKGAAGEP) show a composition bias toward low complexity. The span at 464 to 491 (QGPAGSPGFQGLPGPAGPPGEAGKPGEQ) shows a compositional bias: low complexity. The span at 530-557 (NGAPGNDGAKGDAGAPGAPGSQGAPGLQ) shows a compositional bias: low complexity. At K581 the chain carries 5-hydroxylysine. A 4-hydroxyproline mark is found at P587, P602, and P608. Residues 614-628 (SGPSGPAGPTGARGA) are compositionally biased toward low complexity. Position 617 is a phosphoserine (S617). 4-hydroxyproline is present on residues P629, P635, P638, P647, P653, P671, P680, and P689. Over residues 641 to 668 (AGFAGPPGADGQPGAKGEPGDAGAKGDA) the composition is skewed to low complexity. Residues 670-682 (PPGPAGPTGPPGP) show a composition bias toward pro residues. K692 is modified (5-hydroxylysine). Positions 697-713 (SAGPPGATGFPGAAGRV) are enriched in low complexity. 4-hydroxyproline occurs at positions 701 and 707. Residue P715 is modified to 3-hydroxyproline. P716, P725, P728, P749, P758, P767, P776, P794, P803, P806, P812, P827, P833, P839, P848, and P854 each carry 4-hydroxyproline. Positions 742–751 (ETGPAGRPGE) are enriched in low complexity. A compositionally biased stretch (low complexity) spans 761 to 776 (TGEKGSPGADGPAGAP). Over residues 826–836 (PPGPVGPPGLA) the composition is skewed to pro residues. The segment covering 838 to 853 (PPGESGREGSPGAEGS) has biased composition (low complexity). The residue at position 863 (K863) is a 5-hydroxylysine. Positions 872-887 (AGPPGAPGAPGAPGPV) are enriched in pro residues. 3 positions are modified to 4-hydroxyproline: P875, P878, and P881. Positions 908-922 (AGPAGARGPAGPQGP) are enriched in low complexity. The span at 923 to 937 (RGDKGETGEQGDRGI) shows a compositional bias: basic and acidic residues. K926 carries the 5-hydroxylysine modification. At K938 the chain carries 5-hydroxylysine; alternate. The O-linked (Gal...) hydroxylysine; alternate glycan is linked to K938. Residues P953, P956, P974, and P989 each carry the 4-hydroxyproline modification. Residues 956-989 (PGEQGPSGASGPAGPRGPPGSAGSPGKDGLNGLP) show a composition bias toward low complexity. P994 carries the 3-hydroxyproline modification. P995 carries the post-translational modification 4-hydroxyproline. Over residues 1007 to 1022 (VGPPGPPGPPGPPGPP) the composition is skewed to pro residues. P1009 carries the 3-hydroxyproline modification. 4-hydroxyproline is present on P1010. The residue at position 1012 (P1012) is a 3-hydroxyproline. Residue P1013 is modified to 4-hydroxyproline. At P1015 the chain carries 3-hydroxyproline. 4-hydroxyproline is present on residues P1016, P1019, and P1022.

Belongs to the fibrillar collagen family. In terms of assembly, trimers of one alpha 2(I) and two alpha 1(I) chains. In terms of processing, prolines at the third position of the tripeptide repeating unit (G-X-Y) are hydroxylated in some or all of the chains. As to expression, expressed in bone.

The protein localises to the secreted. It localises to the extracellular space. The protein resides in the extracellular matrix. Type I collagen is a member of group I collagen (fibrillar forming collagen). The chain is Collagen alpha-1(I) chain from Mylodon darwinii (Giant ground sloth).